Reading from the N-terminus, the 495-residue chain is Internal alternative NAD(P)H-ubiquinone oxidoreductase A1, mitochondrial (495 aa).

A mitochondrion-targeting transit peptide spans 1–41 (MPWFKNLIKISKTITNQSSSYKSITPLASPLLAQFLQFTKQ). 61 to 91 (RIVVLGSGWAGCRLMKDIDTNIYDVVCVSPR) contacts FAD. 228–264 (LHCVVVGGGPTGVEFSGELSDFILKDVHQRYAHVKDY) provides a ligand contact to NAD(+). The Microbody targeting signal motif lies at 486–495 (LVFGRDISRI).

The protein belongs to the NADH dehydrogenase family. FAD serves as cofactor.

It is found in the mitochondrion inner membrane. The protein localises to the peroxisome. The enzyme catalyses a quinone + NADH + H(+) = a quinol + NAD(+). The catalysed reaction is a ubiquinone + NADH + H(+) = a ubiquinol + NAD(+). Alternative NADH-ubiquinone oxidoreductase which catalyzes the oxidation of mitochondrial NADH does not translocate protons across the inner mitochondrial membrane. In Solanum tuberosum (Potato), this protein is Internal alternative NAD(P)H-ubiquinone oxidoreductase A1, mitochondrial (NDA1).